The primary structure comprises 213 residues: Outer-membrane lipoprotein carrier protein (213 aa).

Residues 1–23 (MKKLLKQSLLGFALVSMTGAAFA) form the signal peptide.

It belongs to the LolA family. As to quaternary structure, monomer.

It is found in the periplasm. In terms of biological role, participates in the translocation of lipoproteins from the inner membrane to the outer membrane. Only forms a complex with a lipoprotein if the residue after the N-terminal Cys is not an aspartate (The Asp acts as a targeting signal to indicate that the lipoprotein should stay in the inner membrane). This is Outer-membrane lipoprotein carrier protein from Actinobacillus pleuropneumoniae serotype 3 (strain JL03).